The primary structure comprises 154 residues: OCIA domain-containing protein 2 (154 aa).

The interval 1–22 (MASASARGNQDKDAHFPPPSKQ) is disordered. In terms of domain architecture, OCIA spans 1 to 120 (MASASARGNQ…HFFEDQLRGA (120 aa)). An N6-acetyllysine modification is found at lysine 41.

Interacts (via OCIA domain) with OCIAD1/ASRIJ and STAT3.

It localises to the endosome. The protein localises to the mitochondrion. Its subcellular location is the mitochondrion inner membrane. Functionally, has an essential role in the assembly of mitochondrial respiratory chain complex III. Is also required for STAT3 activation and plays a role in cell migration. The chain is OCIA domain-containing protein 2 (OCIAD2) from Homo sapiens (Human).